We begin with the raw amino-acid sequence, 475 residues long: Bifunctional protein HldE (475 aa).

Residues 1 to 318 (MIQYSSKFNN…ENAIHHREET (318 aa)) form a ribokinase region. 195-198 (NMSE) provides a ligand contact to ATP. Aspartate 264 is a catalytic residue. The cytidylyltransferase stretch occupies residues 344–475 (MTNGCFDILH…NVIKKIQASK (132 aa)).

It in the N-terminal section; belongs to the carbohydrate kinase PfkB family. The protein in the C-terminal section; belongs to the cytidylyltransferase family. In terms of assembly, homodimer.

The enzyme catalyses D-glycero-beta-D-manno-heptose 7-phosphate + ATP = D-glycero-beta-D-manno-heptose 1,7-bisphosphate + ADP + H(+). The catalysed reaction is D-glycero-beta-D-manno-heptose 1-phosphate + ATP + H(+) = ADP-D-glycero-beta-D-manno-heptose + diphosphate. The protein operates within nucleotide-sugar biosynthesis; ADP-L-glycero-beta-D-manno-heptose biosynthesis; ADP-L-glycero-beta-D-manno-heptose from D-glycero-beta-D-manno-heptose 7-phosphate: step 1/4. Its pathway is nucleotide-sugar biosynthesis; ADP-L-glycero-beta-D-manno-heptose biosynthesis; ADP-L-glycero-beta-D-manno-heptose from D-glycero-beta-D-manno-heptose 7-phosphate: step 3/4. It functions in the pathway bacterial outer membrane biogenesis; LPS core biosynthesis. Its function is as follows. Catalyzes the phosphorylation of D-glycero-D-manno-heptose 7-phosphate at the C-1 position to selectively form D-glycero-beta-D-manno-heptose-1,7-bisphosphate. Catalyzes the ADP transfer from ATP to D-glycero-beta-D-manno-heptose 1-phosphate, yielding ADP-D-glycero-beta-D-manno-heptose. This is Bifunctional protein HldE (hldE) from Actinobacillus pleuropneumoniae (Haemophilus pleuropneumoniae).